Consider the following 426-residue polypeptide: Histidine--tRNA ligase (426 aa).

This sequence belongs to the class-II aminoacyl-tRNA synthetase family.

The protein resides in the cytoplasm. It carries out the reaction tRNA(His) + L-histidine + ATP = L-histidyl-tRNA(His) + AMP + diphosphate + H(+). The sequence is that of Histidine--tRNA ligase from Saccharolobus islandicus (strain Y.N.15.51 / Yellowstone #2) (Sulfolobus islandicus).